Reading from the N-terminus, the 32-residue chain is Variegin (32 aa).

Residues 1 to 32 (SDQGDVAEPKMHKTAPPFDFEAIPEEYLDDES) are disordered. Residues 8–14 (EPKMHKT) are contains the active site. A glycan (O-linked (Hex) threonine) is linked at Thr14. Over residues 22-32 (AIPEEYLDDES) the composition is skewed to acidic residues.

Interacts with human F2 (thrombin); the interaction results in thrombin inhibition.

It localises to the secreted. Its function is as follows. Thrombin inhibitor. Does not inhibit other serine proteases. This is Variegin from Amblyomma variegatum (Tropical bont tick).